Here is a 122-residue protein sequence, read N- to C-terminus: Neutral phospholipase A2 agkistrodotoxin (122 aa).

Cystine bridges form between cysteine 26–cysteine 115, cysteine 28–cysteine 44, cysteine 43–cysteine 95, cysteine 49–cysteine 122, cysteine 50–cysteine 88, cysteine 57–cysteine 81, and cysteine 75–cysteine 86. The Ca(2+) site is built by tyrosine 27, glycine 29, and glycine 31. The active site involves histidine 47. Residue aspartate 48 coordinates Ca(2+). Aspartate 89 is an active-site residue.

Ca(2+) is required as a cofactor. As to expression, expressed by the venom gland.

Its subcellular location is the secreted. The catalysed reaction is a 1,2-diacyl-sn-glycero-3-phosphocholine + H2O = a 1-acyl-sn-glycero-3-phosphocholine + a fatty acid + H(+). Its function is as follows. Snake venom phospholipase A2 (PLA2) that inhibits neuromuscular transmission by blocking acetylcholine release from the nerve termini. PLA2 catalyzes the calcium-dependent hydrolysis of the 2-acyl groups in 3-sn-phosphoglycerides. The polypeptide is Neutral phospholipase A2 agkistrodotoxin (Gloydius halys (Chinese water mocassin)).